We begin with the raw amino-acid sequence, 361 residues long: Aminomethyltransferase (361 aa).

It belongs to the GcvT family. In terms of assembly, the glycine cleavage system is composed of four proteins: P, T, L and H.

It catalyses the reaction N(6)-[(R)-S(8)-aminomethyldihydrolipoyl]-L-lysyl-[protein] + (6S)-5,6,7,8-tetrahydrofolate = N(6)-[(R)-dihydrolipoyl]-L-lysyl-[protein] + (6R)-5,10-methylene-5,6,7,8-tetrahydrofolate + NH4(+). The glycine cleavage system catalyzes the degradation of glycine. This is Aminomethyltransferase from Herpetosiphon aurantiacus (strain ATCC 23779 / DSM 785 / 114-95).